The primary structure comprises 175 residues: Ribulose bisphosphate carboxylase small subunit, chloroplastic (175 aa).

The transit peptide at 1-34 directs the protein to the chloroplast; sequence MSFATTNKTIVPCATTKQIVRPRFLSNGTISKSR.

The protein belongs to the RuBisCO small chain family. Heterohexadecamer of 8 large and 8 small subunits.

The protein resides in the plastid. It localises to the chloroplast. Functionally, ruBisCO catalyzes two reactions: the carboxylation of D-ribulose 1,5-bisphosphate, the primary event in carbon dioxide fixation, as well as the oxidative fragmentation of the pentose substrate. Both reactions occur simultaneously and in competition at the same active site. Although the small subunit is not catalytic it is essential for maximal activity. In Batophora oerstedii (Green alga), this protein is Ribulose bisphosphate carboxylase small subunit, chloroplastic.